Reading from the N-terminus, the 131-residue chain is Profilin-10 (131 aa).

Cys13 and Cys115 are disulfide-bonded. The Involved in PIP2 interaction motif lies at 81–97 (AVIRGKKGSGGITVKKT). Residue Thr111 is modified to Phosphothreonine.

The protein belongs to the profilin family. In terms of assembly, occurs in many kinds of cells as a complex with monomeric actin in a 1:1 ratio. Phosphorylated by MAP kinases.

The protein localises to the cytoplasm. Its subcellular location is the cytoskeleton. In terms of biological role, binds to actin and affects the structure of the cytoskeleton. At high concentrations, profilin prevents the polymerization of actin, whereas it enhances it at low concentrations. In Zea mays (Maize), this protein is Profilin-10.